Reading from the N-terminus, the 305-residue chain is Serine/threonine-protein phosphatase 6 catalytic subunit (305 aa).

Met-1 carries the N-acetylmethionine modification. Residues Asp-53, His-55, Asp-81, and Asn-113 each coordinate Mn(2+). The Proton donor role is filled by His-114. Residues His-163 and His-237 each coordinate Mn(2+).

This sequence belongs to the PPP phosphatase family. PP-6 (PP-V) subfamily. Protein phosphatase 6 (PP6) holoenzyme is proposed to be a heterotrimeric complex formed by the catalytic subunit, a SAPS domain-containing subunit (PP6R) and an ankyrin repeat-domain containing regulatory subunit (ARS). Interacts with subunits PPP6R1, PPP6R2 and PPP6R3. Interacts with subunit ANKRD28. Interacts with IGBP1. Interacts with MAP3K7. Interacts with NFKBIE. Interacts with TRIM14 and WRNIP1; these interactions positively regulate the RIG-I signaling pathway. Requires Mn(2+) as cofactor. Ubiquitously expressed in all tissues tested with strongest expression in lung, spleen, liver, kidney and brain. Weaker expression observed in bladder, pancreas, heart and skeletal muscle.

The protein localises to the mitochondrion. It localises to the cytoplasm. It carries out the reaction O-phospho-L-seryl-[protein] + H2O = L-seryl-[protein] + phosphate. The enzyme catalyses O-phospho-L-threonyl-[protein] + H2O = L-threonyl-[protein] + phosphate. Functionally, catalytic subunit of protein phosphatase 6 (PP6). PP6 is a component of a signaling pathway regulating cell cycle progression in response to IL2 receptor stimulation. N-terminal domain restricts G1 to S phase progression in cancer cells, in part through control of cyclin D13 During mitosis, regulates spindle positioning. Down-regulates MAP3K7 kinase activation of the IL1 signaling pathway by dephosphorylation of MAP3K7. Acts as a regulator of innate immunity by mediating dephosphorylation CGAS, STING1 and RIGI. Also participates in the innate immune defense against viruses by desphosphorylating RIGI, an essential step that triggers RIGI-mediated signaling activation. Also regulates innate immunity by acting as a negative regulator of the cGAS-STING pathway: mediates dephosphorylation and inactivation of CGAS and STING1. CGAS dephosphorylation at 'Ser-420' impairs its ability to bind GTP, thereby inactivating it. The protein is Serine/threonine-protein phosphatase 6 catalytic subunit of Mus musculus (Mouse).